Here is a 71-residue protein sequence, read N- to C-terminus: uncharacterized protein (71 aa).

The next 2 helical transmembrane spans lie at 9 to 29 and 41 to 61; these read FVIFSLFFTFISVSTFGNINF and FVALFYIFTHTSFTSLCFFGL.

Its subcellular location is the membrane. This is an uncharacterized protein from Acheta domesticus (House cricket).